Consider the following 279-residue polypeptide: Pantothenate synthetase (279 aa).

26–33 provides a ligand contact to ATP; that stretch reads MGGLHEGH. The active-site Proton donor is the H33. Q57 is a binding site for (R)-pantoate. Beta-alanine is bound at residue Q57. Residue 143-146 coordinates ATP; that stretch reads GKKD. Q149 contributes to the (R)-pantoate binding site. Residues V172 and 180–183 contribute to the ATP site; that span reads LSSR.

Belongs to the pantothenate synthetase family. Homodimer.

It is found in the cytoplasm. It carries out the reaction (R)-pantoate + beta-alanine + ATP = (R)-pantothenate + AMP + diphosphate + H(+). It participates in cofactor biosynthesis; (R)-pantothenate biosynthesis; (R)-pantothenate from (R)-pantoate and beta-alanine: step 1/1. Catalyzes the condensation of pantoate with beta-alanine in an ATP-dependent reaction via a pantoyl-adenylate intermediate. This Nitrosospira multiformis (strain ATCC 25196 / NCIMB 11849 / C 71) protein is Pantothenate synthetase.